The following is a 132-amino-acid chain: MGRDTIADIITSIRNADMDKKGRVRIGYTNIAENIIKILLREGFIENVRKHRESNKYFLVSTLRHRRNRKRPYKTILKRISRPGLRIYSNYQRIPRILGGIGIVILSTSRGIMTDREARLEGIGGEILCYIW.

The protein belongs to the universal ribosomal protein uS8 family. Part of the 30S ribosomal subunit.

The protein localises to the plastid. The protein resides in the chloroplast. One of the primary rRNA binding proteins, it binds directly to 16S rRNA central domain where it helps coordinate assembly of the platform of the 30S subunit. This chain is Small ribosomal subunit protein uS8c (rps8), found in Platanus occidentalis (Sycamore).